The sequence spans 138 residues: Proofreading thioesterase EntH (138 aa).

Residue glutamate 64 is the Nucleophile or proton acceptor of the active site.

This sequence belongs to the thioesterase PaaI family. As to quaternary structure, homotetramer. Dimer of dimers. Interacts specifically with the aryl carrier protein (ArCP) domain of EntB.

It localises to the cytoplasm. Its pathway is siderophore biosynthesis; enterobactin biosynthesis. In terms of biological role, required for optimal enterobactin synthesis. Acts as a proofreading enzyme that prevents EntB misacylation by hydrolyzing the thioester bound existing between EntB and wrongly charged molecules. This Citrobacter rodentium (strain ICC168) (Citrobacter freundii biotype 4280) protein is Proofreading thioesterase EntH.